The sequence spans 1393 residues: DNA-directed RNA polymerase subunit beta' (1393 aa).

Zn(2+) is bound by residues cysteine 70, cysteine 72, cysteine 85, and cysteine 88. 3 residues coordinate Mg(2+): aspartate 461, aspartate 463, and aspartate 465. Residues cysteine 815, cysteine 889, cysteine 896, and cysteine 899 each coordinate Zn(2+).

The protein belongs to the RNA polymerase beta' chain family. The RNAP catalytic core consists of 2 alpha, 1 beta, 1 beta' and 1 omega subunit. When a sigma factor is associated with the core the holoenzyme is formed, which can initiate transcription. It depends on Mg(2+) as a cofactor. Zn(2+) is required as a cofactor.

It carries out the reaction RNA(n) + a ribonucleoside 5'-triphosphate = RNA(n+1) + diphosphate. Its function is as follows. DNA-dependent RNA polymerase catalyzes the transcription of DNA into RNA using the four ribonucleoside triphosphates as substrates. This chain is DNA-directed RNA polymerase subunit beta', found in Vesicomyosocius okutanii subsp. Calyptogena okutanii (strain HA).